Here is a 317-residue protein sequence, read N- to C-terminus: tRNA dimethylallyltransferase (317 aa).

An ATP-binding site is contributed by 14–21 (GPTASGKS). 16–21 (TASGKS) lines the substrate pocket. 2 interaction with substrate tRNA regions span residues 39-42 (DSVL) and 163-167 (QRIQR).

The protein belongs to the IPP transferase family. In terms of assembly, monomer. The cofactor is Mg(2+).

The catalysed reaction is adenosine(37) in tRNA + dimethylallyl diphosphate = N(6)-dimethylallyladenosine(37) in tRNA + diphosphate. Catalyzes the transfer of a dimethylallyl group onto the adenine at position 37 in tRNAs that read codons beginning with uridine, leading to the formation of N6-(dimethylallyl)adenosine (i(6)A). In Xylella fastidiosa (strain 9a5c), this protein is tRNA dimethylallyltransferase.